A 545-amino-acid chain; its full sequence is Betaine receptor acr-23 (545 aa).

The first 19 residues, 1–19, serve as a signal peptide directing secretion; the sequence is MHRIYTFLIFISQLALGLS. Over 20–244 the chain is Extracellular; the sequence is NNPDIPIQYE…DVVIQRKPLY (225 aa). Asn-53 and Asn-97 each carry an N-linked (GlcNAc...) asparagine glycan. 2 cysteine pairs are disulfide-bonded: Cys-157/Cys-171 and Cys-224/Cys-225. N-linked (GlcNAc...) asparagine glycosylation occurs at Asn-228. The chain crosses the membrane as a helical span at residues 245–265; that stretch reads YVLNLIAPTAVITFISIIGFF. Asn-276 is a glycosylation site (N-linked (GlcNAc...) asparagine). 2 helical membrane-spanning segments follow: residues 287-307 and 317-337; these read EKIT…FMVS and VPLI…GTLA. Residues 338–512 are Cytoplasmic-facing; that stretch reads ASSVIFVQKL…WDWVAAVLER (175 aa). The chain crosses the membrane as a helical span at residues 513–533; sequence VFLIFFTICFLFSAIGINLYG.

Belongs to the ligand-gated ion channel (TC 1.A.9) family. Acetylcholine receptor (TC 1.A.9.1) subfamily. As to expression, expressed in the body wall muscles that are arranged into four longitudinal bundles, some mechanosensory neurons, the head muscles and multiple interneurons. Not expressed in motor neurons (at protein level).

It is found in the cell membrane. Its function is as follows. Betaine receptor that functions as a ligand-gated non-selective monovalent cation channel in mechanosensory neurons to maintain basal levels of locomotion. The channel is permeable to Na(+) and K(+) but not to Ba(2+) or Ca(2+) ions. Elicits current in response to betaine, very weak current in response to choline, virtually no current in response to acetylcholine and nicotine, and no current in response to glycine and GABA. This is Betaine receptor acr-23 from Caenorhabditis elegans.